Reading from the N-terminus, the 106-residue chain is Phosphoribosyl-ATP pyrophosphatase 1 (106 aa).

The protein belongs to the PRA-PH family.

The protein localises to the cytoplasm. It carries out the reaction 1-(5-phospho-beta-D-ribosyl)-ATP + H2O = 1-(5-phospho-beta-D-ribosyl)-5'-AMP + diphosphate + H(+). Its pathway is amino-acid biosynthesis; L-histidine biosynthesis; L-histidine from 5-phospho-alpha-D-ribose 1-diphosphate: step 2/9. The sequence is that of Phosphoribosyl-ATP pyrophosphatase 1 (hisE1) from Bradyrhizobium diazoefficiens (strain JCM 10833 / BCRC 13528 / IAM 13628 / NBRC 14792 / USDA 110).